The chain runs to 309 residues: Probable L,D-transpeptidase ErfK/SrfK (309 aa).

Residues 1-21 form the signal peptide; the sequence is MRRITPFFPFFVLLVSHFSLA. Residues 96-231 enclose the L,D-TPase catalytic domain; that stretch reads EGIVVNVAEM…VPVGTRVQII (136 aa). Residue H191 is the Proton donor/acceptor of the active site. C207 acts as the Nucleophile in catalysis.

The protein belongs to the YkuD family.

Its subcellular location is the periplasm. Its pathway is cell wall biogenesis; peptidoglycan biosynthesis. This is Probable L,D-transpeptidase ErfK/SrfK (erfK) from Salmonella typhimurium (strain LT2 / SGSC1412 / ATCC 700720).